The chain runs to 365 residues: Protein-glutamate methylesterase/protein-glutamine glutaminase 1 (365 aa).

In terms of domain architecture, Response regulatory spans 4 to 121; it reads KVLVVDDSQF…SRDSVVLKKR (118 aa). 4-aspartylphosphate is present on D55. The segment at 138 to 173 is disordered; that stretch reads AARSTTQPSGVRPSALGANLSSSRSPRPASSAPSAP. Residues 158–172 show a composition bias toward low complexity; it reads SSSRSPRPASSAPSA. The CheB-type methylesterase domain occupies 182-365; that stretch reads KLVAIGASTG…QVWQRLVSDV (184 aa). Residues S189, H216, and D310 contribute to the active site.

Belongs to the CheB family. In terms of processing, phosphorylated by CheA. Phosphorylation of the N-terminal regulatory domain activates the methylesterase activity.

It localises to the cytoplasm. It catalyses the reaction [protein]-L-glutamate 5-O-methyl ester + H2O = L-glutamyl-[protein] + methanol + H(+). It carries out the reaction L-glutaminyl-[protein] + H2O = L-glutamyl-[protein] + NH4(+). Its function is as follows. Involved in chemotaxis. Part of a chemotaxis signal transduction system that modulates chemotaxis in response to various stimuli. Catalyzes the demethylation of specific methylglutamate residues introduced into the chemoreceptors (methyl-accepting chemotaxis proteins or MCP) by CheR. Also mediates the irreversible deamidation of specific glutamine residues to glutamic acid. In Saccharophagus degradans (strain 2-40 / ATCC 43961 / DSM 17024), this protein is Protein-glutamate methylesterase/protein-glutamine glutaminase 1.